The following is a 326-amino-acid chain: 4-hydroxythreonine-4-phosphate dehydrogenase (326 aa).

T132 is a binding site for substrate. 3 residues coordinate a divalent metal cation: H160, H205, and H260. 3 residues coordinate substrate: K268, N277, and R286.

This sequence belongs to the PdxA family. As to quaternary structure, homodimer. Requires Zn(2+) as cofactor. The cofactor is Mg(2+). Co(2+) is required as a cofactor.

The protein localises to the cytoplasm. The catalysed reaction is 4-(phosphooxy)-L-threonine + NAD(+) = 3-amino-2-oxopropyl phosphate + CO2 + NADH. It functions in the pathway cofactor biosynthesis; pyridoxine 5'-phosphate biosynthesis; pyridoxine 5'-phosphate from D-erythrose 4-phosphate: step 4/5. Functionally, catalyzes the NAD(P)-dependent oxidation of 4-(phosphooxy)-L-threonine (HTP) into 2-amino-3-oxo-4-(phosphooxy)butyric acid which spontaneously decarboxylates to form 3-amino-2-oxopropyl phosphate (AHAP). This chain is 4-hydroxythreonine-4-phosphate dehydrogenase, found in Stenotrophomonas maltophilia (strain R551-3).